The following is a 271-amino-acid chain: Formamidopyrimidine-DNA glycosylase (271 aa).

Proline 2 serves as the catalytic Schiff-base intermediate with DNA. The active-site Proton donor is the glutamate 3. Residue lysine 58 is the Proton donor; for beta-elimination activity of the active site. 3 residues coordinate DNA: histidine 91, arginine 110, and arginine 152. An FPG-type zinc finger spans residues 237-271; sequence NVYGRGGKACKKCRKPLTEKKLGQRTTVYCTHCQK. Arginine 261 acts as the Proton donor; for delta-elimination activity in catalysis.

Belongs to the FPG family. Monomer. Requires Zn(2+) as cofactor.

The enzyme catalyses Hydrolysis of DNA containing ring-opened 7-methylguanine residues, releasing 2,6-diamino-4-hydroxy-5-(N-methyl)formamidopyrimidine.. It carries out the reaction 2'-deoxyribonucleotide-(2'-deoxyribose 5'-phosphate)-2'-deoxyribonucleotide-DNA = a 3'-end 2'-deoxyribonucleotide-(2,3-dehydro-2,3-deoxyribose 5'-phosphate)-DNA + a 5'-end 5'-phospho-2'-deoxyribonucleoside-DNA + H(+). Involved in base excision repair of DNA damaged by oxidation or by mutagenic agents. Acts as a DNA glycosylase that recognizes and removes damaged bases. Has a preference for oxidized purines, such as 7,8-dihydro-8-oxoguanine (8-oxoG). Has AP (apurinic/apyrimidinic) lyase activity and introduces nicks in the DNA strand. Cleaves the DNA backbone by beta-delta elimination to generate a single-strand break at the site of the removed base with both 3'- and 5'-phosphates. This Saccharophagus degradans (strain 2-40 / ATCC 43961 / DSM 17024) protein is Formamidopyrimidine-DNA glycosylase.